We begin with the raw amino-acid sequence, 309 residues long: Ribosomal RNA small subunit methyltransferase H (309 aa).

Residues 33–35 (GGH), Asp-53, Phe-79, Asp-100, and Gln-107 contribute to the S-adenosyl-L-methionine site.

It belongs to the methyltransferase superfamily. RsmH family.

Its subcellular location is the cytoplasm. The catalysed reaction is cytidine(1402) in 16S rRNA + S-adenosyl-L-methionine = N(4)-methylcytidine(1402) in 16S rRNA + S-adenosyl-L-homocysteine + H(+). Specifically methylates the N4 position of cytidine in position 1402 (C1402) of 16S rRNA. This is Ribosomal RNA small subunit methyltransferase H from Clostridium kluyveri (strain NBRC 12016).